A 278-amino-acid chain; its full sequence is 4-hydroxy-3-methylbut-2-enyl diphosphate reductase (278 aa).

Residue C12 coordinates [4Fe-4S] cluster. (2E)-4-hydroxy-3-methylbut-2-enyl diphosphate-binding residues include H40 and H75. Residues H40 and H75 each contribute to the dimethylallyl diphosphate site. The isopentenyl diphosphate site is built by H40 and H75. C97 lines the [4Fe-4S] cluster pocket. H125 provides a ligand contact to (2E)-4-hydroxy-3-methylbut-2-enyl diphosphate. Residue H125 coordinates dimethylallyl diphosphate. H125 provides a ligand contact to isopentenyl diphosphate. Residue E127 is the Proton donor of the active site. Position 157 (T157) interacts with (2E)-4-hydroxy-3-methylbut-2-enyl diphosphate. Position 187 (C187) interacts with [4Fe-4S] cluster. Residues S215, S216, N217, and S258 each contribute to the (2E)-4-hydroxy-3-methylbut-2-enyl diphosphate site. Dimethylallyl diphosphate is bound by residues S215, S216, N217, and S258. S215, S216, N217, and S258 together coordinate isopentenyl diphosphate.

It belongs to the IspH family. It depends on [4Fe-4S] cluster as a cofactor.

It catalyses the reaction isopentenyl diphosphate + 2 oxidized [2Fe-2S]-[ferredoxin] + H2O = (2E)-4-hydroxy-3-methylbut-2-enyl diphosphate + 2 reduced [2Fe-2S]-[ferredoxin] + 2 H(+). It carries out the reaction dimethylallyl diphosphate + 2 oxidized [2Fe-2S]-[ferredoxin] + H2O = (2E)-4-hydroxy-3-methylbut-2-enyl diphosphate + 2 reduced [2Fe-2S]-[ferredoxin] + 2 H(+). The protein operates within isoprenoid biosynthesis; dimethylallyl diphosphate biosynthesis; dimethylallyl diphosphate from (2E)-4-hydroxy-3-methylbutenyl diphosphate: step 1/1. It participates in isoprenoid biosynthesis; isopentenyl diphosphate biosynthesis via DXP pathway; isopentenyl diphosphate from 1-deoxy-D-xylulose 5-phosphate: step 6/6. Functionally, catalyzes the conversion of 1-hydroxy-2-methyl-2-(E)-butenyl 4-diphosphate (HMBPP) into a mixture of isopentenyl diphosphate (IPP) and dimethylallyl diphosphate (DMAPP). Acts in the terminal step of the DOXP/MEP pathway for isoprenoid precursor biosynthesis. This is 4-hydroxy-3-methylbut-2-enyl diphosphate reductase from Pseudothermotoga lettingae (strain ATCC BAA-301 / DSM 14385 / NBRC 107922 / TMO) (Thermotoga lettingae).